The sequence spans 378 residues: Diacetylchitobiose uptake system ATP-binding protein MsiK (378 aa).

One can recognise an ABC transporter domain in the interval Val-4–Ile-236. Gly-38–Ser-45 contributes to the ATP binding site.

This sequence belongs to the ABC transporter superfamily. In terms of assembly, the DasABC-MsiK complex is composed of two ATP-binding proteins (MsiK), two transmembrane proteins (DasB and DasC) and a solute-binding protein (DasA). The NgcEFG-MsiK complex is composed of two ATP-binding proteins (MsiK), two transmembrane proteins (NgcF and NgcG) and a solute-binding protein (NgcE).

Its subcellular location is the cell membrane. Part of the ABC transporter complexes DasABC-MsiK and NgcEFG-MsiK involved in N,N'-diacetylchitobiose ((GlcNAc)2) uptake. Responsible for energy coupling to the transport system. The polypeptide is Diacetylchitobiose uptake system ATP-binding protein MsiK (Streptomyces coelicolor (strain ATCC BAA-471 / A3(2) / M145)).